A 450-amino-acid polypeptide reads, in one-letter code: Putative cysteine--tRNA ligase 2 (450 aa).

Positions Ile29–His39 match the 'HIGH' region motif. The 'KMSKS' region motif lies at Lys270–Ser274. Lys273 contacts ATP. The tract at residues Pro372–Gln392 is disordered.

The protein belongs to the class-I aminoacyl-tRNA synthetase family. As to quaternary structure, monomer.

The protein resides in the cytoplasm. It catalyses the reaction tRNA(Cys) + L-cysteine + ATP = L-cysteinyl-tRNA(Cys) + AMP + diphosphate. In Tropheryma whipplei (strain TW08/27) (Whipple's bacillus), this protein is Putative cysteine--tRNA ligase 2 (cysS2).